A 947-amino-acid polypeptide reads, in one-letter code: MSLPSRQTAIIVNPPPPEYINTKKNGRLTNQLQYLQKVVLKDLWKHSFSWPFQRPVDAVKLQLPDYYTIIKNPMDLNTIKKRLENKYYAKASECIEDFNTMFSNCYLYNKPGDDIVLMAQALEKLFMQKLSQMPQEEQVVGVKERIKKGTQQNIAVSSAKEKSSPSATEKVFKQQEIPSVFPKTSISPLNVVQGASVNSSSQTAAQVTKGVKRKADTTTPATSAVKASSEFSPTFTEKSVALPPIKENMPKNVLPDSQQQYNVVKTVKVTEQLRHCSEILKEMLAKKHFSYAWPFYNPVDVNALGLHNYYDVVKNPMDLGTIKEKMDNQEYKDAYKFAADVRLMFMNCYKYNPPDHEVVTMARMLQDVFETHFSKIPIEPVESMPLCYIKTDITETTGRENTNEASSEGNSSDDSEDERVKRLAKLQEQLKAVHQQLQVLSQVPFRKLNKKKEKSKKEKKKEKVNNSNENPRKMCEQMRLKEKSKRNQPKKRKQQFIGLKSEDEDNAKPMNYDEKRQLSLNINKLPGDKLGRVVHIIQSREPSLSNSNPDEIEIDFETLKASTLRELEKYVSACLRKRPLKPPAKKIMMSKEELHSQKKQELEKRLLDVNNQLNSRKRQTKSDKTQPSKAVENVSRLSESSSSSSSSSESESSSSDLSSSDSSDSESEMFPKFTEVKPNDSPSKENVKKMKNECIPPEGRTGVTQIGYCVQDTTSANTTLVHQTTPSHVMPPNHHQLAFNYQELEHLQTVKNISPLQILPPSGDSEQLSNGITVMHPSGDSDTTMLESECQAPVQKDIKIKNADSWKSLGKPVKPSGVMKSSDELFNQFRKAAIEKEVKARTQELIRKHLEQNTKELKASQENQRDLGNGLTVESFSNKIQNKCSGEEQKEHQQSSEAQDKSKLWLLKDRDLARQKEQERRRREAMVGTIDMTLQSDIMTMFENNFD.

Positions 27–133 constitute a Bromo 1 domain; that stretch reads RLTNQLQYLQ…KLFMQKLSQM (107 aa). A JQ1-binding site is contributed by N109. Position 187 is a phosphoserine (S187). Positions 202-228 are disordered; the sequence is QTAAQVTKGVKRKADTTTPATSAVKAS. Residues 209 to 220 carry the Nuclear localization signal motif; it reads KGVKRKADTTTP. Polar residues predominate over residues 217-228; that stretch reads TTTPATSAVKAS. The Bromo 2 domain occupies 267–376; sequence VKVTEQLRHC…DVFETHFSKI (110 aa). Disordered stretches follow at residues 395-420, 444-511, 610-698, and 882-924; these read ETTGRENTNEASSEGNSSDDSEDERV, PFRK…KPMN, NNQL…IPPE, and NKCS…RRRE. The stretch at 417–470 forms a coiled coil; it reads DERVKRLAKLQEQLKAVHQQLQVLSQVPFRKLNKKKEKSKKEKKKEKVNNSNEN. Positions 447–462 are enriched in basic residues; sequence KLNKKKEKSKKEKKKE. Basic and acidic residues predominate over residues 470–481; that stretch reads NPRKMCEQMRLK. The span at 482–494 shows a compositional bias: basic residues; it reads EKSKRNQPKKRKQ. An NET domain is found at 500-582; that stretch reads KSEDEDNAKP…ACLRKRPLKP (83 aa). Residues 591–621 are a coiled coil; sequence KEELHSQKKQELEKRLLDVNNQLNSRKRQTK. The segment covering 637-662 has biased composition (low complexity); sequence LSESSSSSSSSSESESSSSDLSSSDS. Basic and acidic residues-rich tracts occupy residues 674-692 and 885-924; these read TEVKPNDSPSKENVKKMKN and SGEEQKEHQQSSEAQDKSKLWLLKDRDLARQKEQERRRRE.

The protein belongs to the BET family. Interacts with mRNA splicing machinery proteins SRSF2, DDX5, HNRNPK and TARDBP. Interacts with the acetylated N-terminus of histone H1, H2, H3 and H4. Interacts with P-TEFb components CDK9 and CCNT1/cyclin-T1. Interacts with SMARCE1. Interacts with the acetylated N-terminus of histone H1.4, H2A, H2B, H3 and H4. Post-translationally, ubiquitinated in a SPOP-dependent manner, leading to proteasomal degradation. In terms of tissue distribution, testis-specific. A 3-fold higher expression is seen in adult testis than in embryo testis. Expression seems to be correlated with histone H4 hyperacetylation during the haploid phase of spermatogenesis (spermiogenesis). No expression, or very low expression is seen in patients' testes with abnormal spermatogenesis. Expressed in cancers such as non-small cell lung cancer and squamous cell carcinomas of the head and neck as well as of esophagus, but not in melanoma or in cancers of the colon, breast, kidney and bladder.

The protein localises to the nucleus. Its function is as follows. Testis-specific chromatin protein that specifically binds histone H4 acetylated at 'Lys-5' and 'Lys-8' (H4K5ac and H4K8ac, respectively) and plays a key role in spermatogenesis. Required in late pachytene spermatocytes: plays a role in meiotic and post-meiotic cells by binding to acetylated histones at the promoter of specific meiotic and post-meiotic genes, facilitating their activation at the appropriate time. In the post-meiotic phase of spermatogenesis, binds to hyperacetylated histones and participates in their general removal from DNA. Also recognizes and binds a subset of butyrylated histones: able to bind histone H4 butyrylated at 'Lys-8' (H4K8ac), while it is not able to bind H4 butyrylated at 'Lys-5' (H4K5ac). Also acts as a component of the splicing machinery in pachytene spermatocytes and round spermatids and participates in 3'-UTR truncation of specific mRNAs in post-meiotic spermatids. Required for chromocenter organization, a structure comprised of peri-centromeric heterochromatin. This Homo sapiens (Human) protein is Bromodomain testis-specific protein (BRDT).